Reading from the N-terminus, the 214-residue chain is N-(5'-phosphoribosyl)anthranilate isomerase (214 aa).

It belongs to the TrpF family.

It catalyses the reaction N-(5-phospho-beta-D-ribosyl)anthranilate = 1-(2-carboxyphenylamino)-1-deoxy-D-ribulose 5-phosphate. It functions in the pathway amino-acid biosynthesis; L-tryptophan biosynthesis; L-tryptophan from chorismate: step 3/5. The sequence is that of N-(5'-phosphoribosyl)anthranilate isomerase from Haloarcula marismortui (strain ATCC 43049 / DSM 3752 / JCM 8966 / VKM B-1809) (Halobacterium marismortui).